A 272-amino-acid chain; its full sequence is D-aminoacyl-tRNA deacylase (272 aa).

It belongs to the DtdA deacylase family. Monomer. It depends on Zn(2+) as a cofactor.

It carries out the reaction a D-aminoacyl-tRNA + H2O = a tRNA + a D-alpha-amino acid + H(+). It catalyses the reaction glycyl-tRNA(Ala) + H2O = tRNA(Ala) + glycine + H(+). In terms of biological role, D-aminoacyl-tRNA deacylase with broad substrate specificity. By recycling D-aminoacyl-tRNA to D-amino acids and free tRNA molecules, this enzyme counteracts the toxicity associated with the formation of D-aminoacyl-tRNA entities in vivo. This chain is D-aminoacyl-tRNA deacylase, found in Thermococcus onnurineus (strain NA1).